The following is a 104-amino-acid chain: MNKLIILGLACIIAVASAMPYGPGDGHGGGHGGGHGGGHGNGQGGGHGHGPGGGFGGGHGGGHGGGGRGGGGSGGGGSPGHGAGGGYPGGHGGGHHGGYQTHGY.

An N-terminal signal peptide occupies residues 1 to 20 (MNKLIILGLACIIAVASAMP). The tract at residues 22-104 (GPGDGHGGGH…HHGGYQTHGY (83 aa)) is disordered. Gly residues predominate over residues 23–97 (PGDGHGGGHG…PGGHGGGHHG (75 aa)). 18 repeat units span residues 27 to 30 (HGGG), 31 to 34 (HGGG), 35 to 38 (HGGG), 39 to 42 (HGNG), 43 to 46 (QGGG), 47 to 50 (HGHG), 51 to 54 (PGGG), 55 to 58 (FGGG), 59 to 62 (HGGG), 63 to 66 (HGGG), 67 to 70 (GRGG), 71 to 74 (GGSG), 75 to 78 (GGGS), 79 to 82 (PGHG), 83 to 86 (AGGG), 87 to 90 (YPGG), 91 to 94 (HGGG), and 96 to 98 (HGG). The 18 X 4 AA approximate tandem repeats of H-G-G-G stretch occupies residues 27 to 98 (HGGGHGGGHG…GGHGGGHHGG (72 aa)).

The protein to T.molitor tenecin 3.

It is found in the secreted. In terms of biological role, has antifungal activity against C.albicans. The protein is Holotricin-3 of Holotrichia diomphalia (Korean black chafer).